A 164-amino-acid chain; its full sequence is Photosystem II extrinsic protein V (164 aa).

An N-terminal signal peptide occupies residues 1 to 27 (MNRISIYRIKVLAFLFAVSTYVYPASS). C64, C67, H68, and H119 together coordinate heme c.

Belongs to the cytochrome c family. PsbV subfamily. PSII is composed of 1 copy each of membrane proteins PsbA, PsbB, PsbC, PsbD, PsbE, PsbF, PsbH, PsbI, PsbJ, PsbK, PsbL, PsbM, PsbT, PsbY, PsbZ, Psb30/Ycf12, at least 3 peripheral proteins of the oxygen-evolving complex and a large number of cofactors. It forms dimeric complexes. The extrinsic subunits in red algae are PsbO (OEC33), PsbQ', cytochrome c-550 and PsbU. It depends on heme c as a cofactor.

The protein localises to the plastid. Its subcellular location is the chloroplast thylakoid membrane. One of the extrinsic, lumenal subunits of photosystem II (PSII). PSII is a light-driven water plastoquinone oxidoreductase, using light energy to abstract electrons from H(2)O, generating a proton gradient subsequently used for ATP formation. The extrinsic proteins stabilize the structure of photosystem II oxygen-evolving complex (OEC), the ion environment of oxygen evolution and protect the OEC against heat-induced inactivation. The chain is Photosystem II extrinsic protein V from Cyanidium caldarium (Red alga).